An 828-amino-acid chain; its full sequence is MHKIEQKWQKIWKEEKAFQVSNDSSKPKYYVLEMLPYPSGKIHIGHIRNYSIGDVIARFMTMQGFNVLHPMGWDAFGLPAENAAIQNNSRPQDWTYSNIEYMKKQLQSMGFSYDWTREINSCDPQYYKHEQKFFLELYDRDLVYQKESLVNWDPVDNTVLANEQVVNGRGWRSGAIIEKRYLNQWFLKITNYAEELLNEIQNLKDWPEAVRVMQEEWIGKSTGVNFHFKIKYHENSTIEVFSTKPETIFGASFIGIAFNHPIIEQLIFKTDEIANFITKCSYITKSSELEKSEKEGVFTGLYVIHPFDANIILPVIITNFVLMDYGTGAIFGCPAHDKRDHELAMKMNLPIKKVIGTDNTQEEVLINSDWLNGLTSSEAKQKVISKFETLGIGKRSVNYRLKDWGISRQRFWGCPIPIIYCETCGIVPVPYKDLPVTLPDDVSFDNNYNPLEHHPSWKHVNCPKCDNHAIRETDTFDTFFESSWYFTRYCNNNAVEMTDSKACNYWLPVDKYIGGIEHAVMHLLYARFFTKLMNEHHYVSIREPFKGLFTQGMVLHATYKDENNNWLYPAEVVKNGNEFFHKETNTRVVQGRIEKMSKSKKNIIDLETIQEQYSADAIRLFVLSDSPPEKDLQWSASGIEGCSRFIHKLDNMFEVISSLKDDMNNEINTELNRLIHFTIKHVADDIKTFSLNRAIARMRTLTNAIYCEISKDKIDVRTIKYGFNVLIQLLNPFIPHITEEIWQKLGNKERLYKSVFAEFDDSMLEFSTYIMAVQVNGKLRDTYEFNTDISEDEVKQITVNLPKIQKFLAGKEPNKIILVPRKIVNIII.

The 'HIGH' region motif lies at 36–46 (PYPSGKIHIGH). The short motif at 595-599 (KMSKS) is the 'KMSKS' region element. Residue lysine 598 coordinates ATP.

This sequence belongs to the class-I aminoacyl-tRNA synthetase family.

Its subcellular location is the cytoplasm. The enzyme catalyses tRNA(Leu) + L-leucine + ATP = L-leucyl-tRNA(Leu) + AMP + diphosphate. The sequence is that of Leucine--tRNA ligase from Rickettsia typhi (strain ATCC VR-144 / Wilmington).